We begin with the raw amino-acid sequence, 137 residues long: Putative pre-16S rRNA nuclease (137 aa).

Belongs to the YqgF nuclease family.

The protein resides in the cytoplasm. Its function is as follows. Could be a nuclease involved in processing of the 5'-end of pre-16S rRNA. This Mycoplasmopsis synoviae (strain 53) (Mycoplasma synoviae) protein is Putative pre-16S rRNA nuclease.